A 1490-amino-acid chain; its full sequence is Leucine-rich repeat-containing protein 7 (1490 aa).

LRR repeat units lie at residues 23–44 (IISV…VFNF), 47–68 (TLEE…LFNC), 70–91 (ALRK…IASL), 93–114 (NLKE…IKCC), 116–137 (CLTI…FTQL), 139–161 (NLTQ…GRLV), 162–183 (KLRI…MHKL), 185–206 (QLER…LDQI), 208–229 (NLRE…IGKL), 231–253 (MLVY…SGCE), 254–275 (ALED…IGLL), 277–298 (KLTT…IGNL), 300–321 (LLEE…IGYL), 323–344 (SLRT…IGSC), 346–367 (NVTV…IGQM), 369–391 (RLRV…TKLK), and 392–413 (ELAA…QTEA). Phosphoserine is present on residues Ser439, Ser441, and Ser443. Residues 663 to 676 (KKESTDESEVDKTH) show a composition bias toward basic and acidic residues. 3 disordered regions span residues 663 to 709 (KKES…VGSL), 775 to 808 (DNTG…HGRR), and 822 to 899 (ELEQ…YHDP). Residues 677–686 (CLNNSVSSGT) show a composition bias toward polar residues. Residues 687 to 700 (YSDYSPSQASSASS) show a composition bias toward low complexity. A compositionally biased stretch (polar residues) spans 787-799 (ENANNNPLLSSKA). Phosphothreonine is present on Thr831. Position 850 is a phosphoserine (Ser850). Residues 859 to 871 (PSKLETTPTTSPL) are compositionally biased toward low complexity. Residue Thr865 is modified to Phosphothreonine. Residue Ser869 is modified to Phosphoserine. The span at 872 to 882 (PERKDHMKEPT) shows a compositional bias: basic and acidic residues. Phosphoserine occurs at positions 947, 949, and 1118. At Arg1149 the chain carries Omega-N-methylarginine. Polar residues predominate over residues 1194-1217 (LTQRRPLSARSYSTESYGASQTRP). Residues 1194 to 1218 (LTQRRPLSARSYSTESYGASQTRPV) are disordered. Ser1233 bears the Phosphoserine mark. Disordered stretches follow at residues 1238–1265 (GNYG…SCGK) and 1282–1312 (RLDR…PYPL). A compositionally biased stretch (basic and acidic residues) spans 1243–1263 (KTSDNSDIKTRPTPVKGEESC). The span at 1286–1307 (TPSQQSNILDNGQEDVSPSGQW) shows a compositional bias: polar residues. Residues Ser1288 and Ser1392 each carry the phosphoserine modification. The 91-residue stretch at 1398-1488 (EQFCVRIEKN…TVDLVIQREL (91 aa)) folds into the PDZ domain.

The protein belongs to the LAP (LRR and PDZ) protein family. As to quaternary structure, interacts with CNKSR2 and DLG4. Interacts with CTNND2/Catenin delta-2. Forms a complex with N-cadherin through CTNND2. Interacts with CAMK2A. O-glycosylated and phosphorylated. Brain-specific. Highly concentrated at synapses.

Its subcellular location is the cytoplasm. The protein localises to the postsynaptic density. Required for normal synaptic spine architecture and function. Necessary for DISC1 and GRM5 localization to postsynaptic density complexes and for both N-methyl D-aspartate receptor-dependent and metabotropic glutamate receptor-dependent long term depression. The chain is Leucine-rich repeat-containing protein 7 (Lrrc7) from Rattus norvegicus (Rat).